The following is a 217-amino-acid chain: ATP synthase subunit 4, mitochondrial (217 aa).

The transit peptide at methionine 1–tyrosine 14 directs the protein to the mitochondrion. 2 helical membrane-spanning segments follow: residues glycine 41–valine 61 and isoleucine 66–tyrosine 86.

In terms of assembly, F-type ATP synthases have 2 components, the catalytic core F(1) and the membrane-embedded component F(0), linked together by a central stalk and a peripheral stalk. The central stalk, also called rotor shaft, is often seen as part of F(1). The peripheral stalk is seen as part of F(0). F(0) contains the membrane channel next to the rotor. F-type ATP synthases form dimers but each monomer functions independently in ATP generation. The dimer consists of 17 different polypeptides: ATP1 (subunit alpha, 3 molecules per monomer, part of F(1)), ATP2 (subunit beta, 3 copies per monomer, part of F(1)), ATP3 (subunit gamma, part of the central stalk), ATP4 (subunit b, part of the peripheral stalk), ATP5/OSCP (subunit 5/OSCP, part of the peripheral stalk), ATP6 (subunit a, part of the peripheral stalk), ATP7 (subunit d, part of the peripheral stalk), ATP8 (subunit 8, part of the peripheral stalk), OLI1 (subunit c, part of the rotor, 10 molecules per monomer), ATP14 (subunit h, part of the peripheral stalk), ATP15 (subunit epsilon, part of the central stalk), ATP16 (subunit delta, part of the central stalk), ATP17 (subunit f, part of the peripheral stalk), ATP18 (subunit i/j, part of the peripheral stalk), ATP19 (subunit k, dimer-specific, at interface between monomers), ATP20 (subunit g, at interface between monomers), TIM11 (subunit e, at interface between monomers).

It localises to the mitochondrion inner membrane. Functionally, mitochondrial membrane ATP synthase (F(1)F(0) ATP synthase or Complex V) produces ATP from ADP in the presence of a proton gradient across the membrane which is generated by electron transport complexes of the respiratory chain. F-type ATP synthases consist of two structural domains, F(1) - containing the extramembraneous catalytic core, and F(0) - containing the membrane proton channel, linked together by a central stalk and a peripheral stalk. During catalysis, ATP synthesis in the catalytic domain of F(1) is coupled via a rotary mechanism of the central stalk subunits to proton translocation. Part of the complex F(0) domain and the peripheral stalk, which acts as a stator to hold the catalytic alpha/ATP1(3)beta/ATP2(3) subcomplex and subunit a/ATP6 static relative to the rotary elements. The chain is ATP synthase subunit 4, mitochondrial from Yarrowia lipolytica (strain CLIB 122 / E 150) (Yeast).